A 104-amino-acid polypeptide reads, in one-letter code: Large ribosomal subunit protein uL24 (104 aa).

Belongs to the universal ribosomal protein uL24 family. In terms of assembly, part of the 50S ribosomal subunit.

Its function is as follows. One of two assembly initiator proteins, it binds directly to the 5'-end of the 23S rRNA, where it nucleates assembly of the 50S subunit. One of the proteins that surrounds the polypeptide exit tunnel on the outside of the subunit. The polypeptide is Large ribosomal subunit protein uL24 (Pseudoalteromonas translucida (strain TAC 125)).